Consider the following 158-residue polypeptide: Non-secretory ribonuclease (158 aa).

Residues 1–27 form the signal peptide; it reads MVPKLFTSQICLLPLLGLLSAEGSPHA. His42 functions as the Proton acceptor in the catalytic mechanism. The residue at position 60 (Tyr60) is a 3'-nitrotyrosine. 65–69 is a substrate binding site; the sequence is KNKNT. N-linked (GlcNAc...) asparagine glycosylation is found at Asn86, Asn92, and Asn111. The active-site Proton donor is the His153.

It belongs to the pancreatic ribonuclease family. Interacts with and forms a tight 1:1 complex with RNH1. Dimerization of two such complexes may occur.

The protein resides in the lysosome. Its subcellular location is the cytoplasmic granule. The catalysed reaction is an [RNA] containing cytidine + H2O = an [RNA]-3'-cytidine-3'-phosphate + a 5'-hydroxy-ribonucleotide-3'-[RNA].. The enzyme catalyses an [RNA] containing uridine + H2O = an [RNA]-3'-uridine-3'-phosphate + a 5'-hydroxy-ribonucleotide-3'-[RNA].. In terms of biological role, this is a non-secretory ribonuclease. It is a pyrimidine specific nuclease with a slight preference for U. Cytotoxin and helminthotoxin. Possesses a wide variety of biological activities. This chain is Non-secretory ribonuclease (RNASE2), found in Callithrix jacchus (White-tufted-ear marmoset).